Reading from the N-terminus, the 266-residue chain is 5'-nucleotidase SurE (266 aa).

The a divalent metal cation site is built by Asp10, Asp11, Ser41, and Asn97.

Belongs to the SurE nucleotidase family. Requires a divalent metal cation as cofactor.

Its subcellular location is the cytoplasm. It catalyses the reaction a ribonucleoside 5'-phosphate + H2O = a ribonucleoside + phosphate. Functionally, nucleotidase that shows phosphatase activity on nucleoside 5'-monophosphates. The sequence is that of 5'-nucleotidase SurE from Methanocella arvoryzae (strain DSM 22066 / NBRC 105507 / MRE50).